The primary structure comprises 452 residues: Putative zinc metalloprotease VC_2253 (452 aa).

Residue histidine 22 coordinates Zn(2+). Glutamate 23 is a catalytic residue. Histidine 26 provides a ligand contact to Zn(2+). A helical membrane pass occupies residues 98 to 120 (SAIVSAGPIFNFLFAIFAYWLVF). Residues 197–292 (NLRDWNFDPE…QVELTLIPDS (96 aa)) enclose the PDZ domain. The next 2 membrane-spanning stretches (helical) occupy residues 378-400 (FVYF…LVPL) and 428-447 (MGYR…AIFN).

This sequence belongs to the peptidase M50B family. It depends on Zn(2+) as a cofactor.

It localises to the cell inner membrane. In Vibrio cholerae serotype O1 (strain ATCC 39315 / El Tor Inaba N16961), this protein is Putative zinc metalloprotease VC_2253.